The primary structure comprises 459 residues: Putrescine aminotransferase (459 aa).

Pyridoxal 5'-phosphate contacts are provided by residues 150 to 151 and Q274; that span reads GT. K300 bears the N6-(pyridoxal phosphate)lysine mark. T332 is a binding site for pyridoxal 5'-phosphate.

The protein belongs to the class-III pyridoxal-phosphate-dependent aminotransferase family. Putrescine aminotransferase subfamily. Pyridoxal 5'-phosphate serves as cofactor.

It carries out the reaction an alkane-alpha,omega-diamine + 2-oxoglutarate = an omega-aminoaldehyde + L-glutamate. It catalyses the reaction putrescine + 2-oxoglutarate = 1-pyrroline + L-glutamate + H2O. The catalysed reaction is cadaverine + 2-oxoglutarate = 5-aminopentanal + L-glutamate. The protein operates within amine and polyamine degradation; putrescine degradation; 4-aminobutanal from putrescine (transaminase route): step 1/1. Functionally, catalyzes the aminotransferase reaction from putrescine to 2-oxoglutarate, leading to glutamate and 4-aminobutanal, which spontaneously cyclizes to form 1-pyrroline. This is the first step in one of two pathways for putrescine degradation, where putrescine is converted into 4-aminobutanoate (gamma-aminobutyrate or GABA) via 4-aminobutanal. Also functions as a cadaverine transaminase in a a L-lysine degradation pathway to succinate that proceeds via cadaverine, glutarate and L-2-hydroxyglutarate. The chain is Putrescine aminotransferase from Salmonella heidelberg (strain SL476).